The chain runs to 164 residues: V-type proton ATPase subunit c' (164 aa).

Over 1-14 (MSTQLASNIYAPLY) the chain is Vacuolar. The chain crosses the membrane as a helical span at residues 15-37 (APFFGFAGCAAAMVLSCLGAAIG). Topologically, residues 38–59 (TAKSGIGIAGIGTFKPELIMKS) are cytoplasmic. Residues 60-80 (LIPVVMSGILAIYGLVVAVLI) form a helical membrane-spanning segment. Over 81–98 (AGNLSPTEDYTLFNGFMH) the chain is Vacuolar. Residues 99 to 120 (LSCGLCVGFACLSSGYAIGMVG) traverse the membrane as a helical segment. At 121-132 (DVGVRKYMHQPR) the chain is on the cytoplasmic side. Residues 133-158 (LFVGIVLILIFSEVLGLYGMIVALIL) traverse the membrane as a helical segment. At 159–164 (NTRGSE) the chain is on the vacuolar side.

Belongs to the V-ATPase proteolipid subunit family. As to quaternary structure, V-ATPase is a heteromultimeric enzyme composed of a peripheral catalytic V1 complex (components A to H) attached to an integral membrane V0 proton pore complex (components: a, c, c', c'', d, e, f and VOA1). The decameric c-ring forms the proton-conducting pore, and is composed of eight proteolipid subunits c, one subunit c' and one subunit c''.

Its subcellular location is the vacuole membrane. Its function is as follows. Proton-conducting pore forming subunit of the V0 complex of vacuolar(H+)-ATPase (V-ATPase), a multisubunit enzyme composed of a peripheral complex (V1) that hydrolyzes ATP and a membrane integral complex (V0) that translocates protons. V-ATPase is responsible for acidifying and maintaining the pH of intracellular compartments. The polypeptide is V-type proton ATPase subunit c' (VMA11) (Saccharomyces cerevisiae (strain ATCC 204508 / S288c) (Baker's yeast)).